A 406-amino-acid chain; its full sequence is Subtilisin-like protease CPC735_023170 (406 aa).

An N-terminal signal peptide occupies residues 1-20; sequence MRLFQSTCVLVGTVLPLFTA. A propeptide spanning residues 21–118 is cleaved from the precursor; it reads FPISSPREIE…VEPDSMAYVT (98 aa). The 81-residue stretch at 35-115 folds into the Inhibitor I9 domain; it reads KYIITFKKGI…VESVEPDSMA (81 aa). Asn125 carries N-linked (GlcNAc...) asparagine glycosylation. One can recognise a Peptidase S8 domain in the interval 127–406; that stretch reads TYGPRRISHR…NKLAYNGSGK (280 aa). Residues Asp161 and His192 each act as charge relay system in the active site. Residue Asn239 is glycosylated (N-linked (GlcNAc...) asparagine). The interval 283-309 is disordered; that stretch reads NDGRDAGRNSPGSAPESITVGSINSRR. Asn346 is a glycosylation site (N-linked (GlcNAc...) asparagine). Ser351 acts as the Charge relay system in catalysis. Asn402 carries an N-linked (GlcNAc...) asparagine glycan.

Belongs to the peptidase S8 family.

It is found in the secreted. Its function is as follows. Secreted subtilisin-like serine protease with keratinolytic activity that contributes to pathogenicity. The chain is Subtilisin-like protease CPC735_023170 from Coccidioides posadasii (strain C735) (Valley fever fungus).